A 294-amino-acid polypeptide reads, in one-letter code: Release factor glutamine methyltransferase (294 aa).

The S-adenosyl-L-methionine site is built by glutamate 148 and asparagine 201. 201–204 is a substrate binding site; it reads NPPY.

It belongs to the protein N5-glutamine methyltransferase family. PrmC subfamily.

The enzyme catalyses L-glutaminyl-[peptide chain release factor] + S-adenosyl-L-methionine = N(5)-methyl-L-glutaminyl-[peptide chain release factor] + S-adenosyl-L-homocysteine + H(+). Its function is as follows. Methylates the class 1 translation termination release factors RF1/PrfA and RF2/PrfB on the glutamine residue of the universally conserved GGQ motif. This is Release factor glutamine methyltransferase from Bifidobacterium longum (strain NCC 2705).